Reading from the N-terminus, the 362-residue chain is Glutamate--cysteine ligase (362 aa).

This sequence belongs to the glutamate--cysteine ligase type 2 family. YbdK subfamily.

The enzyme catalyses L-cysteine + L-glutamate + ATP = gamma-L-glutamyl-L-cysteine + ADP + phosphate + H(+). Catalyzes the synthesis of gamma-glutamylcysteine (gamma-GC), the main low-molecular-weight thiol compound instead of glutathione in halophilic archaea. The protein is Glutamate--cysteine ligase of Natronomonas pharaonis (strain ATCC 35678 / DSM 2160 / CIP 103997 / JCM 8858 / NBRC 14720 / NCIMB 2260 / Gabara) (Halobacterium pharaonis).